Reading from the N-terminus, the 128-residue chain is 3-aminoacrylate deaminase RutC (128 aa).

Belongs to the RutC family.

The catalysed reaction is (Z)-3-aminoacrylate + H2O + H(+) = 3-oxopropanoate + NH4(+). In terms of biological role, involved in pyrimidine catabolism. Catalyzes the deamination of 3-aminoacrylate to malonic semialdehyde, a reaction that can also occur spontaneously. RutC may facilitate the reaction and modulate the metabolic fitness, rather than catalyzing essential functions. The protein is 3-aminoacrylate deaminase RutC of Pantoea ananatis (strain LMG 20103).